Reading from the N-terminus, the 368-residue chain is MKILVALSGGVDSAVSAKILKDAGYEIEGCYMKLHGRDDYHAKNIEKVQDVGNFLEIKTHILDLCDDFKREVFEPFLQTYKVGKTPNPCALCNRTIKFGKFLDFARSKGCDKIATGHYAKIENNLIKSAVDLSKDQSYFLANIEPRVIPNIVFPLGNMLKKDVKKFAASFPELEKISKSSESNEICFVENTYIDVLREFYKTETPGIVRNLQGEIVGKHNGYMNFTVGKRRGFDVFGAHEPHYVVKIDAKKNEIVVGSKADLDKNEFETQNFNAFLNIDEILKMDEIYVKIRYRSAKIACKIEISLNDNLNNESLTDKNLNFENSDFLNNQDLKAKIILKTPANGVASGQLAVFYDKSDCVIASGFIA.

ATP-binding positions include 6–13 (ALSGGVDS) and Met-32. The active-site Nucleophile is the Cys-92. Cys-92 and Cys-186 are oxidised to a cystine. An ATP-binding site is contributed by Gly-116. The tract at residues 134-136 (KDQ) is interaction with tRNA. Cys-186 acts as the Cysteine persulfide intermediate in catalysis. The interval 292 to 293 (RY) is interaction with tRNA.

This sequence belongs to the MnmA/TRMU family.

The protein localises to the cytoplasm. The catalysed reaction is S-sulfanyl-L-cysteinyl-[protein] + uridine(34) in tRNA + AH2 + ATP = 2-thiouridine(34) in tRNA + L-cysteinyl-[protein] + A + AMP + diphosphate + H(+). Functionally, catalyzes the 2-thiolation of uridine at the wobble position (U34) of tRNA, leading to the formation of s(2)U34. This chain is tRNA-specific 2-thiouridylase MnmA, found in Campylobacter hominis (strain ATCC BAA-381 / DSM 21671 / CCUG 45161 / LMG 19568 / NCTC 13146 / CH001A).